A 166-amino-acid polypeptide reads, in one-letter code: RING-H2 finger protein ATL79 (166 aa).

The signal sequence occupies residues 1–16 (MRLLVAEAASPLSSAA). The helical transmembrane segment at 41-61 (SVLLILVISALICALSLYAAI) threads the bilayer. Positions 71–90 (TEDDHKPDPEAAASSTPTTP) are disordered. Residues 81 to 90 (AAASSTPTTP) show a composition bias toward low complexity. The segment at 107-149 (CAICLSEFEQGESIQVLEKCQHGFHVKCIHKWLSTRSSCPTCR) adopts an RING-type; atypical zinc-finger fold.

It belongs to the RING-type zinc finger family. ATL subfamily.

The protein resides in the membrane. It catalyses the reaction S-ubiquitinyl-[E2 ubiquitin-conjugating enzyme]-L-cysteine + [acceptor protein]-L-lysine = [E2 ubiquitin-conjugating enzyme]-L-cysteine + N(6)-ubiquitinyl-[acceptor protein]-L-lysine.. The protein operates within protein modification; protein ubiquitination. This chain is RING-H2 finger protein ATL79 (ATL79), found in Arabidopsis thaliana (Mouse-ear cress).